The primary structure comprises 590 residues: Glutamine--tRNA ligase (590 aa).

The 'HIGH' region motif lies at 55–65 (PEPNGYLHIGH). ATP is bound by residues 56–58 (EPN) and 62–68 (HIGHAKS). L-glutamine contacts are provided by Asp93 and Tyr238. Residues Thr257 and 292–293 (RL) each bind ATP. Residues 299–303 (ITSKR) carry the 'KMSKS' region motif.

It belongs to the class-I aminoacyl-tRNA synthetase family. As to quaternary structure, monomer.

Its subcellular location is the cytoplasm. It carries out the reaction tRNA(Gln) + L-glutamine + ATP = L-glutaminyl-tRNA(Gln) + AMP + diphosphate. In Polynucleobacter necessarius subsp. necessarius (strain STIR1), this protein is Glutamine--tRNA ligase.